The primary structure comprises 249 residues: 2,3-bisphosphoglycerate-dependent phosphoglycerate mutase (249 aa).

Substrate contacts are provided by residues R8–N15, T21–G22, R60, E87–Y90, K98, R114–R115, and G183–N184. The active-site Tele-phosphohistidine intermediate is the H9. E87 serves as the catalytic Proton donor/acceptor.

This sequence belongs to the phosphoglycerate mutase family. BPG-dependent PGAM subfamily.

The enzyme catalyses (2R)-2-phosphoglycerate = (2R)-3-phosphoglycerate. The protein operates within carbohydrate degradation; glycolysis; pyruvate from D-glyceraldehyde 3-phosphate: step 3/5. Its function is as follows. Catalyzes the interconversion of 2-phosphoglycerate and 3-phosphoglycerate. This Methanoregula boonei (strain DSM 21154 / JCM 14090 / 6A8) protein is 2,3-bisphosphoglycerate-dependent phosphoglycerate mutase.